A 183-amino-acid polypeptide reads, in one-letter code: UPF0397 protein VSAL_I1988 (183 aa).

Transmembrane regions (helical) follow at residues 8-28 (VVVIAIGAALYGIGGLPMFGI), 41-61 (AVLALFSVLYGPIVGFLVGFI), 74-94 (VWLTWILGSGIVGMIIGLFPI), 110-130 (FFIFVVLAFVGNVIGYGTSAF), and 147-167 (LCIIAAGNTVLIAVVGYFILT).

This sequence belongs to the UPF0397 family.

Its subcellular location is the cell membrane. The chain is UPF0397 protein VSAL_I1988 from Aliivibrio salmonicida (strain LFI1238) (Vibrio salmonicida (strain LFI1238)).